The sequence spans 501 residues: Probable malate:quinone oxidoreductase (501 aa).

It belongs to the MQO family. FAD is required as a cofactor.

The catalysed reaction is (S)-malate + a quinone = a quinol + oxaloacetate. It participates in carbohydrate metabolism; tricarboxylic acid cycle; oxaloacetate from (S)-malate (quinone route): step 1/1. The polypeptide is Probable malate:quinone oxidoreductase (Mycolicibacterium paratuberculosis (strain ATCC BAA-968 / K-10) (Mycobacterium paratuberculosis)).